Consider the following 323-residue polypeptide: o-succinylbenzoate synthase (323 aa).

Lys-134 (proton donor) is an active-site residue. Asp-162, Glu-191, and Asp-214 together coordinate Mg(2+). The active-site Proton acceptor is Lys-236.

The protein belongs to the mandelate racemase/muconate lactonizing enzyme family. MenC type 1 subfamily. It depends on a divalent metal cation as a cofactor.

The catalysed reaction is (1R,6R)-6-hydroxy-2-succinyl-cyclohexa-2,4-diene-1-carboxylate = 2-succinylbenzoate + H2O. The protein operates within quinol/quinone metabolism; 1,4-dihydroxy-2-naphthoate biosynthesis; 1,4-dihydroxy-2-naphthoate from chorismate: step 4/7. Its pathway is quinol/quinone metabolism; menaquinone biosynthesis. Its function is as follows. Converts 2-succinyl-6-hydroxy-2,4-cyclohexadiene-1-carboxylate (SHCHC) to 2-succinylbenzoate (OSB). This chain is o-succinylbenzoate synthase, found in Pectobacterium atrosepticum (strain SCRI 1043 / ATCC BAA-672) (Erwinia carotovora subsp. atroseptica).